We begin with the raw amino-acid sequence, 211 residues long: Thiamine-phosphate synthase (211 aa).

Residues 37–41 (QLRIK) and Asn-69 each bind 4-amino-2-methyl-5-(diphosphooxymethyl)pyrimidine. Residues Asp-70 and Asp-89 each coordinate Mg(2+). Residue Ser-108 coordinates 4-amino-2-methyl-5-(diphosphooxymethyl)pyrimidine. 134–136 (TQT) is a 2-[(2R,5Z)-2-carboxy-4-methylthiazol-5(2H)-ylidene]ethyl phosphate binding site. Lys-137 serves as a coordination point for 4-amino-2-methyl-5-(diphosphooxymethyl)pyrimidine. 2-[(2R,5Z)-2-carboxy-4-methylthiazol-5(2H)-ylidene]ethyl phosphate-binding positions include Gly-166 and 186–187 (VS).

Belongs to the thiamine-phosphate synthase family. Requires Mg(2+) as cofactor.

The catalysed reaction is 2-[(2R,5Z)-2-carboxy-4-methylthiazol-5(2H)-ylidene]ethyl phosphate + 4-amino-2-methyl-5-(diphosphooxymethyl)pyrimidine + 2 H(+) = thiamine phosphate + CO2 + diphosphate. It catalyses the reaction 2-(2-carboxy-4-methylthiazol-5-yl)ethyl phosphate + 4-amino-2-methyl-5-(diphosphooxymethyl)pyrimidine + 2 H(+) = thiamine phosphate + CO2 + diphosphate. It carries out the reaction 4-methyl-5-(2-phosphooxyethyl)-thiazole + 4-amino-2-methyl-5-(diphosphooxymethyl)pyrimidine + H(+) = thiamine phosphate + diphosphate. Its pathway is cofactor biosynthesis; thiamine diphosphate biosynthesis; thiamine phosphate from 4-amino-2-methyl-5-diphosphomethylpyrimidine and 4-methyl-5-(2-phosphoethyl)-thiazole: step 1/1. Condenses 4-methyl-5-(beta-hydroxyethyl)thiazole monophosphate (THZ-P) and 2-methyl-4-amino-5-hydroxymethyl pyrimidine pyrophosphate (HMP-PP) to form thiamine monophosphate (TMP). This chain is Thiamine-phosphate synthase, found in Salmonella typhimurium (strain LT2 / SGSC1412 / ATCC 700720).